We begin with the raw amino-acid sequence, 74 residues long: Mucroporin (74 aa).

Positions 1–22 (MKVKFLLAVFLIVLVVTDHCHA) are cleaved as a signal peptide. Lys-39 carries the post-translational modification Lysine amide. Positions 45–74 (QMEARFEPQNRNYRKRELDLEKLFANMPDY) are excised as a propeptide.

The protein belongs to the non-disulfide-bridged peptide (NDBP) superfamily. Short antimicrobial peptide (group 4) family. In terms of tissue distribution, expressed by the venom gland.

Its subcellular location is the secreted. It localises to the target cell membrane. In terms of biological role, mucroporin: cationic host defense peptide that have antibacterial activity by breaking membranes. Is more effective on Gram-positive than on Gram-negative bacteria. Minimum inhibitory concentrations (MIC) are the following: MIC=&gt;100 ug/ml against E.coli AB94012, MIC=&gt;100 ug/ml against P.aeruginosa AB93066, MIC=25 ug/ml against B.thuringiensis AB92037, MIC=50 ug/ml against B.subtilis AB91021, MIC=25 ug/ml against S.aureus AB94004, and MIC=25 ug/ml against the methicillin-resistant coagulase-negative Staphylococcus. Its synthetic analog mucroporin-M1 is more effective. Does not show antiviral activity against any of measles, SARS-CoV, influenza H5N1, hepatitis B and HIV-1 viruses. Functionally, mutant mucroporin-M1: can inhibit Gram-positive bacteria at low concentrations and antibiotic-resistant pathogens. Minimum inhibitory concentrations (MIC) are the following: MIC=12.5 ug/ml against E.coli AB94012, MIC=100 ug/ml against P.aeruginosa AB93066, MIC=25 ug/ml against B.thuringiensis AB92037, MIC=25 ug/ml against B.subtilis AB91021, MIC=5 ug/ml against S.aureus AB94004, and MIC=5 ug/ml against the methicillin-resistant coagulase-negative Staphylococcus. Also shows antiviral activities against measles (EC(50) of 7.15 ug/ml), SARS-CoV (EC(50) of 14.46 ug/ml), influenza H5N1 viruses (EC(50) of 2.10 mug/ml), HIV-1, and hepatitis B virus. The chain is Mucroporin from Lychas mucronatus (Chinese swimming scorpion).